The chain runs to 232 residues: Ribose-5-phosphate isomerase A (232 aa).

Substrate contacts are provided by residues 28–31 (TGST), 83–86 (DGAD), and 96–99 (KGGG). Glu105 serves as the catalytic Proton acceptor. A substrate-binding site is contributed by Lys123.

This sequence belongs to the ribose 5-phosphate isomerase family. Homodimer.

The enzyme catalyses aldehydo-D-ribose 5-phosphate = D-ribulose 5-phosphate. The protein operates within carbohydrate degradation; pentose phosphate pathway; D-ribose 5-phosphate from D-ribulose 5-phosphate (non-oxidative stage): step 1/1. Functionally, catalyzes the reversible conversion of ribose-5-phosphate to ribulose 5-phosphate. The polypeptide is Ribose-5-phosphate isomerase A (Rhodopseudomonas palustris (strain HaA2)).